A 601-amino-acid chain; its full sequence is Arginine--tRNA ligase (601 aa).

The 'HIGH' region motif lies at 135–145 (ANPTGPLHLGH).

This sequence belongs to the class-I aminoacyl-tRNA synthetase family. As to quaternary structure, monomer.

It localises to the cytoplasm. It carries out the reaction tRNA(Arg) + L-arginine + ATP = L-arginyl-tRNA(Arg) + AMP + diphosphate. The chain is Arginine--tRNA ligase from Gloeobacter violaceus (strain ATCC 29082 / PCC 7421).